We begin with the raw amino-acid sequence, 489 residues long: uncharacterized protein (489 aa).

Disordered regions lie at residues 1–94 (MIEE…GSLD), 109–229 (NRNQ…SDDD), 300–389 (DDNI…TSIQ), and 428–461 (SESG…TLVK). 2 stretches are compositionally biased toward low complexity: residues 43-53 (LLVQQSNQSVK) and 64-77 (SNGF…NIHD). Residues 121–138 (NFSEDDEDDDAEDDDSSD) are compositionally biased toward acidic residues. The segment covering 144–154 (KKNKPKKPSKL) has biased composition (basic residues). Residues 155 to 164 (MKHDSVDGKN) show a composition bias toward basic and acidic residues. Basic residues predominate over residues 173-199 (SKKKVQHQLKEKNKKKGIKNDKKKSKP). A compositionally biased stretch (acidic residues) spans 308–343 (NDNDNDNDDDNDNDNDNDNDNDNDNDDDENGEDNGE). 2 stretches are compositionally biased toward low complexity: residues 344–389 (DLNI…TSIQ) and 433–449 (SISS…SSKS).

This is an uncharacterized protein from Dictyostelium discoideum (Social amoeba).